A 159-amino-acid polypeptide reads, in one-letter code: SsrA-binding protein (159 aa).

It belongs to the SmpB family.

It is found in the cytoplasm. Functionally, required for rescue of stalled ribosomes mediated by trans-translation. Binds to transfer-messenger RNA (tmRNA), required for stable association of tmRNA with ribosomes. tmRNA and SmpB together mimic tRNA shape, replacing the anticodon stem-loop with SmpB. tmRNA is encoded by the ssrA gene; the 2 termini fold to resemble tRNA(Ala) and it encodes a 'tag peptide', a short internal open reading frame. During trans-translation Ala-aminoacylated tmRNA acts like a tRNA, entering the A-site of stalled ribosomes, displacing the stalled mRNA. The ribosome then switches to translate the ORF on the tmRNA; the nascent peptide is terminated with the 'tag peptide' encoded by the tmRNA and targeted for degradation. The ribosome is freed to recommence translation, which seems to be the essential function of trans-translation. The sequence is that of SsrA-binding protein from Idiomarina loihiensis (strain ATCC BAA-735 / DSM 15497 / L2-TR).